The primary structure comprises 193 residues: Xanthine phosphoribosyltransferase (193 aa).

Residues leucine 20 and threonine 27 each coordinate xanthine. 128 to 132 serves as a coordination point for 5-phospho-alpha-D-ribose 1-diphosphate; that stretch reads ANGQA. Lysine 156 is a xanthine binding site.

It belongs to the purine/pyrimidine phosphoribosyltransferase family. Xpt subfamily. As to quaternary structure, homodimer.

It is found in the cytoplasm. It catalyses the reaction XMP + diphosphate = xanthine + 5-phospho-alpha-D-ribose 1-diphosphate. It participates in purine metabolism; XMP biosynthesis via salvage pathway; XMP from xanthine: step 1/1. Its function is as follows. Converts the preformed base xanthine, a product of nucleic acid breakdown, to xanthosine 5'-monophosphate (XMP), so it can be reused for RNA or DNA synthesis. The sequence is that of Xanthine phosphoribosyltransferase from Streptococcus pyogenes serotype M49 (strain NZ131).